Here is a 127-residue protein sequence, read N- to C-terminus: Glycine cleavage system H protein (127 aa).

The Lipoyl-binding domain maps to 24-105; that stretch reads TALVGITDFA…YNDGWLVKMK (82 aa). N6-lipoyllysine is present on K65.

The protein belongs to the GcvH family. The glycine cleavage system is composed of four proteins: P, T, L and H. It depends on (R)-lipoate as a cofactor.

Its function is as follows. The glycine cleavage system catalyzes the degradation of glycine. The H protein shuttles the methylamine group of glycine from the P protein to the T protein. This is Glycine cleavage system H protein from Pelodictyon phaeoclathratiforme (strain DSM 5477 / BU-1).